A 207-amino-acid polypeptide reads, in one-letter code: Small ribosomal subunit protein uS4 (207 aa).

Residues 31-55 (KCKLDSKPGQHGRTSGARTSDYGTQ) are disordered. The segment covering 42–53 (GRTSGARTSDYG) has biased composition (polar residues). Residues 97–160 (SRLDNVVYRM…KKQARIVEAL (64 aa)) form the S4 RNA-binding domain.

The protein belongs to the universal ribosomal protein uS4 family. As to quaternary structure, part of the 30S ribosomal subunit. Contacts protein S5. The interaction surface between S4 and S5 is involved in control of translational fidelity.

In terms of biological role, one of the primary rRNA binding proteins, it binds directly to 16S rRNA where it nucleates assembly of the body of the 30S subunit. With S5 and S12 plays an important role in translational accuracy. This is Small ribosomal subunit protein uS4 from Burkholderia ambifaria (strain MC40-6).